Consider the following 291-residue polypeptide: Phosphate import ATP-binding protein PstB (291 aa).

One can recognise an ABC transporter domain in the interval 43–286 (ANVKDLSFWY…PKHAMTEEYI (244 aa)). Residue 75 to 82 (GASGCGKS) coordinates ATP.

The protein belongs to the ABC transporter superfamily. Phosphate importer (TC 3.A.1.7) family. The complex is composed of two ATP-binding proteins (PstB), two transmembrane proteins (PstC and PstA) and a solute-binding protein (PstS).

It localises to the cell inner membrane. It catalyses the reaction phosphate(out) + ATP + H2O = ADP + 2 phosphate(in) + H(+). Its function is as follows. Part of the ABC transporter complex PstSACB involved in phosphate import. Responsible for energy coupling to the transport system. This is Phosphate import ATP-binding protein PstB from Alcaligenes faecalis.